The primary structure comprises 198 residues: Angiopoietin-like protein 8 (198 aa).

An N-terminal signal peptide occupies residues 1–21; it reads MPVPALCLLWALAMVTRPASA.

Belongs to the ANGPTL8 family. Interacts with ANGPTL3. In terms of processing, proteolytically cleaved at the N-terminus. Predominantly expressed in liver. Also expressed in adipose tissues.

It localises to the secreted. In terms of biological role, hormone that acts as a blood lipid regulator by regulating serum triglyceride levels. May be involved in the metabolic transition between fasting and refeeding: required to direct fatty acids to adipose tissue for storage in the fed state. The chain is Angiopoietin-like protein 8 from Homo sapiens (Human).